Consider the following 264-residue polypeptide: S-adenosylmethionine decarboxylase proenzyme (264 aa).

The active-site Schiff-base intermediate with substrate; via pyruvic acid is Ser-113. Ser-113 is subject to Pyruvic acid (Ser); by autocatalysis. The Proton acceptor; for processing activity role is filled by His-118. The active-site Proton donor; for catalytic activity is the Cys-141.

The protein belongs to the prokaryotic AdoMetDC family. Type 2 subfamily. As to quaternary structure, heterooctamer of four alpha and four beta chains arranged as a tetramer of alpha/beta heterodimers. It depends on pyruvate as a cofactor. In terms of processing, is synthesized initially as an inactive proenzyme. Formation of the active enzyme involves a self-maturation process in which the active site pyruvoyl group is generated from an internal serine residue via an autocatalytic post-translational modification. Two non-identical subunits are generated from the proenzyme in this reaction, and the pyruvate is formed at the N-terminus of the alpha chain, which is derived from the carboxyl end of the proenzyme. The post-translation cleavage follows an unusual pathway, termed non-hydrolytic serinolysis, in which the side chain hydroxyl group of the serine supplies its oxygen atom to form the C-terminus of the beta chain, while the remainder of the serine residue undergoes an oxidative deamination to produce ammonia and the pyruvoyl group blocking the N-terminus of the alpha chain.

It carries out the reaction S-adenosyl-L-methionine + H(+) = S-adenosyl 3-(methylsulfanyl)propylamine + CO2. The protein operates within amine and polyamine biosynthesis; S-adenosylmethioninamine biosynthesis; S-adenosylmethioninamine from S-adenosyl-L-methionine: step 1/1. Catalyzes the decarboxylation of S-adenosylmethionine to S-adenosylmethioninamine (dcAdoMet), the propylamine donor required for the synthesis of the polyamines spermine and spermidine from the diamine putrescine. The sequence is that of S-adenosylmethionine decarboxylase proenzyme from Xylella fastidiosa (strain Temecula1 / ATCC 700964).